We begin with the raw amino-acid sequence, 139 residues long: Small ribosomal subunit protein uS12 (139 aa).

Asp-102 is subject to 3-methylthioaspartic acid.

The protein belongs to the universal ribosomal protein uS12 family. In terms of assembly, part of the 30S ribosomal subunit. Contacts proteins S8 and S17. May interact with IF1 in the 30S initiation complex.

With S4 and S5 plays an important role in translational accuracy. In terms of biological role, interacts with and stabilizes bases of the 16S rRNA that are involved in tRNA selection in the A site and with the mRNA backbone. Located at the interface of the 30S and 50S subunits, it traverses the body of the 30S subunit contacting proteins on the other side and probably holding the rRNA structure together. The combined cluster of proteins S8, S12 and S17 appears to hold together the shoulder and platform of the 30S subunit. The polypeptide is Small ribosomal subunit protein uS12 (Bacillus pumilus (strain SAFR-032)).